The following is a 153-amino-acid chain: uncharacterized protein (153 aa).

This is an uncharacterized protein from Allochromatium vinosum (strain ATCC 17899 / DSM 180 / NBRC 103801 / NCIMB 10441 / D) (Chromatium vinosum).